The sequence spans 160 residues: Type IV major fimbrial protein FimA (160 aa).

The propeptide at 1 to 7 (MKSLQKG) is leader sequence. The residue at position 8 (F8) is an N-methylphenylalanine. The helical transmembrane segment at 8 to 28 (FTLIELMIVVAIIGILAAFAI) threads the bilayer. The cysteines at positions 63 and 105 are disulfide-linked.

The protein belongs to the N-Me-Phe pilin family. In terms of assembly, the pili are polar flexible filaments of about 5.4 nanometers diameter and 2.5 micrometers average length; they consist of only a single polypeptide chain arranged in a helical configuration of five subunits per turn in the assembled pilus.

Its subcellular location is the fimbrium. It is found in the membrane. Major component of the type IV fimbriae that plays an essential role in twitching motility, natural transformation, and protease secretion. This is Type IV major fimbrial protein FimA (fimA) from Dichelobacter nodosus (Bacteroides nodosus).